The following is a 205-amino-acid chain: Penta-EF hand domain-containing protein 2 (205 aa).

EF-hand domains follow at residues 45–75 (EMQSWFMRVDANRSGTISSGELQYLNIGGTP), 76–111 (LGIETATKLIKVFDHNKNGQIDFYEYAALHQFINNL), and 119–141 (DRNFSGTIDANEIYNALITSGFQ). Ca(2+)-binding residues include Asp54, Asn56, Ser58, Thr60, Glu65, Asp89, Asn91, Asn93, Gln95, and Glu100.

The protein belongs to the Peflin/Sorcin family. In terms of assembly, in contrast to pefA, does not form homodimers in presence of Ca(2+). May form heterodimers with pefA.

Its subcellular location is the cytoplasm. It localises to the membrane. In Dictyostelium discoideum (Social amoeba), this protein is Penta-EF hand domain-containing protein 2 (pefB).